Consider the following 317-residue polypeptide: Melanocyte-stimulating hormone receptor (317 aa).

The Extracellular segment spans residues 1 to 37 (MPMQGAQRRLLGSLNSTPTATPNLGLAANHTGAPCLE). The N-linked (GlcNAc...) asparagine glycan is linked to Asn-29. Residues 38-63 (VSIPDGLFLSLGLVSLVENVLVVAAI) form a helical membrane-spanning segment. Topologically, residues 64–72 (AKNRNLHSP) are cytoplasmic. A helical transmembrane segment spans residues 73-93 (MYCFICCLALSDLLVSGSNML). The Extracellular portion of the chain corresponds to 94-118 (EMAVILLLEAGALATRASVVQQLQN). The chain crosses the membrane as a helical span at residues 119 to 140 (TIDVLTCSSMLCSLCFLGAIAV). The Cytoplasmic segment spans residues 141–163 (DRYVSIFYALRYHSIVTLPRARR). Residues 164–183 (AIAAIWVASVLSSTLFIAYC) form a helical membrane-spanning segment. Residues 184 to 191 (DHAAVLLC) lie on the Extracellular side of the membrane. Residues 192 to 211 (LVVFFLAMLVLMAVLYVHML) traverse the membrane as a helical segment. The Cytoplasmic segment spans residues 212-240 (ARACQHAQGITRLHKRQLPAHQGFGLRGA). Residues 241-266 (ATLTILLGIFFLCWGPFFLHLMLVVL) form a helical membrane-spanning segment. Residues 267 to 279 (CPQHLTCSCIFKN) lie on the Extracellular side of the membrane. Residues 280–300 (FKVFLTLIICNTIIDPLIYAF) traverse the membrane as a helical segment. The Cytoplasmic portion of the chain corresponds to 301–317 (RSQELCRTLREVLLCSW). Cys-315 carries S-palmitoyl cysteine lipidation.

This sequence belongs to the G-protein coupled receptor 1 family. In terms of assembly, interacts with MGRN1, but does not undergo MGRN1-mediated ubiquitination; this interaction competes with GNAS-binding and thus inhibits agonist-induced cAMP production. Interacts with OPN3; the interaction results in a decrease in MC1R-mediated cAMP signaling and ultimately a decrease in melanin production in melanocytes.

The protein localises to the cell membrane. Functionally, receptor for MSH (alpha, beta and gamma) and ACTH. The activity of this receptor is mediated by G proteins which activate adenylate cyclase. Mediates melanogenesis, the production of eumelanin (black/brown) and phaeomelanin (red/yellow), via regulation of cAMP signaling in melanocytes. The chain is Melanocyte-stimulating hormone receptor (MC1R) from Alouatta pigra (Guatemalan howler monkey).